Consider the following 466-residue polypeptide: 3-isopropylmalate dehydratase large subunit (466 aa).

Residues C347, C407, and C410 each contribute to the [4Fe-4S] cluster site.

Belongs to the aconitase/IPM isomerase family. LeuC type 1 subfamily. Heterodimer of LeuC and LeuD. [4Fe-4S] cluster is required as a cofactor.

The enzyme catalyses (2R,3S)-3-isopropylmalate = (2S)-2-isopropylmalate. It participates in amino-acid biosynthesis; L-leucine biosynthesis; L-leucine from 3-methyl-2-oxobutanoate: step 2/4. Its function is as follows. Catalyzes the isomerization between 2-isopropylmalate and 3-isopropylmalate, via the formation of 2-isopropylmaleate. The chain is 3-isopropylmalate dehydratase large subunit from Cronobacter sakazakii (strain ATCC BAA-894) (Enterobacter sakazakii).